We begin with the raw amino-acid sequence, 266 residues long: Protein SCO2 homolog, mitochondrial (266 aa).

The N-terminal 41 residues, Met1 to Gln41, are a transit peptide targeting the mitochondrion. At Gly42–Arg60 the chain is on the mitochondrial matrix side. A helical membrane pass occupies residues Leu61–Leu78. At Arg79–Ser266 the chain is on the mitochondrial intermembrane side. The Thioredoxin domain maps to Leu85–Ala259. 3 residues coordinate Cu cation: Cys133, Cys137, and His224. Residues Cys133 and Cys137 are joined by a disulfide bond.

Belongs to the SCO1/2 family. In terms of assembly, homodimer. Interacts with COA6. Found in a complex with TMEM177, COX20, COA6, MT-CO2/COX2, COX18 and SCO1. Interacts with TMEM177 in a COX20-dependent manner. Interacts with COX20 in a MT-CO2/COX2- and COX18-dependent manner. Interacts with COX16. As to expression, ubiquitous.

It is found in the mitochondrion inner membrane. Its function is as follows. Copper metallochaperone essential for the synthesis and maturation of cytochrome c oxidase subunit II (MT-CO2/COX2) by facilitating the incorporation of copper into the Cu(A) site of MT-CO2/COX2. Could also act as a thiol-disulfide oxidoreductase to regulate the redox state of the cysteines in SCO1 during maturation of MT-CO2/COX2. This Homo sapiens (Human) protein is Protein SCO2 homolog, mitochondrial (SCO2).